The sequence spans 413 residues: Probable isoleucine--tRNA ligase, mitochondrial (413 aa).

The 'KMSKS' region signature appears at 298 to 302; sequence KMSKS. Position 301 (Lys301) interacts with ATP.

It belongs to the class-I aminoacyl-tRNA synthetase family.

The protein resides in the mitochondrion matrix. It catalyses the reaction tRNA(Ile) + L-isoleucine + ATP = L-isoleucyl-tRNA(Ile) + AMP + diphosphate. In Ciona intestinalis (Transparent sea squirt), this protein is Probable isoleucine--tRNA ligase, mitochondrial.